A 571-amino-acid chain; its full sequence is Proline--tRNA ligase (571 aa).

The protein belongs to the class-II aminoacyl-tRNA synthetase family. ProS type 1 subfamily. In terms of assembly, homodimer.

The protein resides in the cytoplasm. It catalyses the reaction tRNA(Pro) + L-proline + ATP = L-prolyl-tRNA(Pro) + AMP + diphosphate. In terms of biological role, catalyzes the attachment of proline to tRNA(Pro) in a two-step reaction: proline is first activated by ATP to form Pro-AMP and then transferred to the acceptor end of tRNA(Pro). As ProRS can inadvertently accommodate and process non-cognate amino acids such as alanine and cysteine, to avoid such errors it has two additional distinct editing activities against alanine. One activity is designated as 'pretransfer' editing and involves the tRNA(Pro)-independent hydrolysis of activated Ala-AMP. The other activity is designated 'posttransfer' editing and involves deacylation of mischarged Ala-tRNA(Pro). The misacylated Cys-tRNA(Pro) is not edited by ProRS. This chain is Proline--tRNA ligase, found in Histophilus somni (strain 129Pt) (Haemophilus somnus).